The chain runs to 858 residues: NEDD4-binding protein 1 (858 aa).

The segment at 17 to 37 is disordered; the sequence is TCTEPPGGRQSPTASRAQPDS. Residues 26–37 show a composition bias toward polar residues; it reads QSPTASRAQPDS. Residues 96–180 enclose the KH-like domain; sequence KEDVYKAKEY…VQQFVALFQE (85 aa). Disordered regions lie at residues 262–321 and 388–424; these read EDKT…TWTV and QKTQ…KEKE. Basic and acidic residues predominate over residues 285 to 316; that stretch reads RSSESEQRDTKRQYSLERREEEQCEEREREPT. A compositionally biased stretch (polar residues) spans 389–418; the sequence is KTQSTQGAQRTSRTPDPSPCANASSTSTSN. The RNase NYN domain occupies 598–750; it reads LRHIIIDGSN…LGKHGPHLDE (153 aa). Polar residues predominate over residues 774 to 784; it reads SVYSQAAQSTA. The segment at 774–823 is disordered; that stretch reads SVYSQAAQSTAHPSSPSHWPHSGPPDWHLPRPSPSPPPQRSPSETTELKR. A compositionally biased stretch (low complexity) spans 785-799; that stretch reads HPSSPSHWPHSGPPD. Residues 804 to 813 show a composition bias toward pro residues; the sequence is RPSPSPPPQR. Positions 813-858 are coCUN; that stretch reads RSPSETTELKRKLYDIFPDQKQRIDRILSDNPYMRDLNALSGLLLG.

It belongs to the N4BP1 family.

It localises to the nucleus. It is found in the nucleolus. The protein resides in the PML body. Its function is as follows. Potent suppressor of cytokine production that acts as a regulator of innate immune signaling and inflammation. Acts as a key negative regulator of select cytokine and chemokine responses elicited by TRIF-independent Toll-like receptors (TLRs), thereby limiting inflammatory cytokine responses to minor insults. Has ribonuclease activity. The sequence is that of NEDD4-binding protein 1 from Danio rerio (Zebrafish).